The sequence spans 499 residues: Maturase K (499 aa).

Belongs to the intron maturase 2 family. MatK subfamily.

It is found in the plastid. The protein localises to the chloroplast. In terms of biological role, usually encoded in the trnK tRNA gene intron. Probably assists in splicing its own and other chloroplast group II introns. The chain is Maturase K from Chamaecrista fasciculata (Showy partridge pea).